The following is a 1992-amino-acid chain: E3 ubiquitin-protein ligase TRIP12 (1992 aa).

Polar residues predominate over residues 1–10 (MSNRPNNNPG). Disordered regions lie at residues 1–398 (MSNR…DDSE), 797–817 (QRKP…SKKD), and 938–1080 (SLLT…ASKD). S2 carries the N-acetylserine modification. S12 is subject to Phosphoserine. Polar residues predominate over residues 18 to 27 (RNTAGAQPQD). Basic and acidic residues predominate over residues 48 to 70 (DPDRANTSERQKTGQVPKKDNSR). Phosphoserine is present on residues S77, S85, and S100. Polar residues predominate over residues 78–88 (PDYNRTNSPSS). Residues 119 to 132 (EQQLKSAQSPSTSK) show a composition bias toward polar residues. 2 stretches are compositionally biased toward low complexity: residues 154 to 166 (SSCV…SEST) and 175 to 216 (PTKL…SSTV). K181 bears the N6-acetyllysine mark. Residues 280-290 (PGSSKSETSKP) show a composition bias toward polar residues. A phosphoserine mark is found at S310 and S312. Polar residues predominate over residues 326–338 (QKTTGSCASTSRR). Residues 346–358 (GAAEARRQEKMAD) show a composition bias toward basic and acidic residues. 2 stretches are compositionally biased toward polar residues: residues 360-371 (ESNQEAVNSSAA) and 803-812 (LANSNTSGYS). Residues 749–836 (MLKKGNAQNT…DPELAKSFIK (88 aa)) enclose the WWE domain. S942 bears the Phosphoserine mark. The span at 948 to 973 (TNGSGSMGSTTSVSSGTATAATHAAA) shows a compositional bias: low complexity. Phosphoserine is present on residues S991 and S997. Residues 1001–1014 (KRKRLPKRGPRRPK) are compositionally biased toward basic residues. Residue S1016 is modified to Phosphoserine. Positions 1017 to 1026 (PPRDDDKVDN) are enriched in basic and acidic residues. A compositionally biased stretch (low complexity) spans 1029 to 1040 (KSPTTTQSPKSS). At S1030 the chain carries Phosphoserine. Polar residues predominate over residues 1041 to 1062 (FLASLNPKTWGRLSTQSNSNNI). Residues S1317, S1322, S1329, and S1376 each carry the phosphoserine modification. T1377 is subject to Phosphothreonine. Disordered regions lie at residues 1407-1433 (SNKD…NAKK) and 1568-1587 (TNPE…PRLD). K1425 is subject to N6-acetyllysine. S1427 carries the post-translational modification Phosphoserine. The segment at 1496–1570 (EIIPTSEFIN…AMQRLLDTNP (75 aa)) is K-box. One can recognise an HECT domain in the interval 1885 to 1992 (PDHGYTHDSR…REGQQSFHLS (108 aa)). C1959 acts as the Glycyl thioester intermediate in catalysis.

The protein belongs to the UPL family. K-HECT subfamily. In terms of assembly, interacts with MYC; leading to disrupt interaction with isoform p19ARF/ARF of CDKN2A. Interacts with TRADD; leading to disrupt interaction with isoform p19ARF/ARF of CDKN2A. Interacts with SMARCC1; leading to disrupt interaction with SMARCE1.

Its subcellular location is the nucleus. It localises to the nucleoplasm. The enzyme catalyses S-ubiquitinyl-[E2 ubiquitin-conjugating enzyme]-L-cysteine + [acceptor protein]-L-lysine = [E2 ubiquitin-conjugating enzyme]-L-cysteine + N(6)-ubiquitinyl-[acceptor protein]-L-lysine.. It functions in the pathway protein modification; protein ubiquitination. E3 ubiquitin-protein ligase involved in ubiquitin fusion degradation (UFD) pathway and regulation of DNA repair. Part of the ubiquitin fusion degradation (UFD) pathway, a process that mediates ubiquitination of protein at their N-terminus, regardless of the presence of lysine residues in target proteins. Acts as a key regulator of DNA damage response by acting as a suppressor of RNF168, an E3 ubiquitin-protein ligase that promotes accumulation of 'Lys-63'-linked histone H2A and H2AX at DNA damage sites, thereby acting as a guard against excessive spreading of ubiquitinated chromatin at damaged chromosomes. In normal cells, mediates ubiquitination and degradation of isoform p19ARF/ARF of CDKN2A, a lysine-less tumor suppressor required for p53/TP53 activation under oncogenic stress. In cancer cells, however, isoform p19ARF/ARF and TRIP12 are located in different cell compartments, preventing isoform p19ARF/ARF ubiquitination and degradation. Does not mediate ubiquitination of isoform p16-INK4a of CDKN2A. Also catalyzes ubiquitination of NAE1 and SMARCE1, leading to their degradation. Ubiquitination and degradation of target proteins is regulated by interaction with proteins such as MYC, TRADD or SMARCC1, which disrupt the interaction between TRIP12 and target proteins. Mediates ubiquitination of ASXL1: following binding to N(6)-methyladenosine methylated DNA, ASXL1 is ubiquitinated by TRIP12, leading to its degradation and subsequent inactivation of the PR-DUB complex. The protein is E3 ubiquitin-protein ligase TRIP12 (TRIP12) of Homo sapiens (Human).